The primary structure comprises 119 residues: Beta-2-microglobulin (119 aa).

The signal sequence occupies residues 1 to 20; it reads MSPSVALAVLALLSLSGLEA. Residues 25 to 114 enclose the Ig-like C1-type domain; sequence PKIQVYSRHP…VTLSGPRTVK (90 aa). An intrachain disulfide couples C45 to C100.

It belongs to the beta-2-microglobulin family. In terms of assembly, heterodimer of an alpha chain and a beta chain. Beta-2-microglobulin is the beta-chain of major histocompatibility complex class I molecules.

Its subcellular location is the secreted. Its function is as follows. Component of the class I major histocompatibility complex (MHC). Involved in the presentation of peptide antigens to the immune system. The chain is Beta-2-microglobulin (B2M) from Macaca fascicularis (Crab-eating macaque).